The primary structure comprises 413 residues: 1-deoxy-D-xylulose 5-phosphate reductoisomerase (413 aa).

Positions 13, 14, 15, 16, 40, 41, and 127 each coordinate NADPH. 1-deoxy-D-xylulose 5-phosphate is bound at residue Lys-128. Glu-129 lines the NADPH pocket. Asp-153 serves as a coordination point for Mn(2+). 1-deoxy-D-xylulose 5-phosphate contacts are provided by Ser-154, Glu-155, Ser-184, and His-207. Residue Glu-155 coordinates Mn(2+). Residue Gly-213 coordinates NADPH. The 1-deoxy-D-xylulose 5-phosphate site is built by Ser-220, Asn-225, Lys-226, and Glu-229. Glu-229 contacts Mn(2+).

It belongs to the DXR family. Requires Mg(2+) as cofactor. Mn(2+) serves as cofactor.

It carries out the reaction 2-C-methyl-D-erythritol 4-phosphate + NADP(+) = 1-deoxy-D-xylulose 5-phosphate + NADPH + H(+). The protein operates within isoprenoid biosynthesis; isopentenyl diphosphate biosynthesis via DXP pathway; isopentenyl diphosphate from 1-deoxy-D-xylulose 5-phosphate: step 1/6. Its function is as follows. Catalyzes the NADPH-dependent rearrangement and reduction of 1-deoxy-D-xylulose-5-phosphate (DXP) to 2-C-methyl-D-erythritol 4-phosphate (MEP). The protein is 1-deoxy-D-xylulose 5-phosphate reductoisomerase of Nitrosomonas eutropha (strain DSM 101675 / C91 / Nm57).